Reading from the N-terminus, the 293-residue chain is Heterogeneous nuclear ribonucleoprotein C-like 4 (293 aa).

The RRM domain occupies 16-87; sequence SRVFIGNLNT…QVVDINLAAE (72 aa). Disordered stretches follow at residues 140 to 177 and 208 to 293; these read VVPS…KLKG and HCKQ…QDDS. The stretch at 177 to 208 forms a coiled coil; it reads GDDLQAIKQELTQIKQKVDSLLENLEKIEKEH. 2 stretches are compositionally biased toward basic and acidic residues: residues 208 to 222 and 229 to 240; these read HCKQ…KSEE and SKKDKTHVKMES. The span at 242 to 263 shows a compositional bias: acidic residues; the sequence is GGADDSVEEGDLLCDDDNEDQG. Residues 269–293 are compositionally biased toward basic and acidic residues; sequence LIKDDEKGAEEGEDDRDRANGQDDS.

This sequence belongs to the RRM HNRPC family. RALY subfamily.

It localises to the nucleus. This Homo sapiens (Human) protein is Heterogeneous nuclear ribonucleoprotein C-like 4.